The primary structure comprises 152 residues: Large ribosomal subunit protein uL13 (152 aa).

Positions 129-152 are disordered; the sequence is EHPHEAQSPEVLDVKSMNKKNTRS.

Belongs to the universal ribosomal protein uL13 family. As to quaternary structure, part of the 50S ribosomal subunit.

Functionally, this protein is one of the early assembly proteins of the 50S ribosomal subunit, although it is not seen to bind rRNA by itself. It is important during the early stages of 50S assembly. This is Large ribosomal subunit protein uL13 from Ruegeria sp. (strain TM1040) (Silicibacter sp.).